The following is a 124-amino-acid chain: Ribonuclease P protein component (124 aa).

Belongs to the RnpA family. Consists of a catalytic RNA component (M1 or rnpB) and a protein subunit.

It carries out the reaction Endonucleolytic cleavage of RNA, removing 5'-extranucleotides from tRNA precursor.. In terms of biological role, RNaseP catalyzes the removal of the 5'-leader sequence from pre-tRNA to produce the mature 5'-terminus. It can also cleave other RNA substrates such as 4.5S RNA. The protein component plays an auxiliary but essential role in vivo by binding to the 5'-leader sequence and broadening the substrate specificity of the ribozyme. This chain is Ribonuclease P protein component, found in Maridesulfovibrio salexigens (strain ATCC 14822 / DSM 2638 / NCIMB 8403 / VKM B-1763) (Desulfovibrio salexigens).